A 387-amino-acid polypeptide reads, in one-letter code: Dual-specificity RNA methyltransferase RlmN (387 aa).

The Proton acceptor role is filled by glutamate 110. One can recognise a Radical SAM core domain in the interval 117 to 349 (VGKAGALCVS…NRAGYASPIR (233 aa)). Cysteine 124 and cysteine 360 are oxidised to a cystine. Cysteine 131, cysteine 135, and cysteine 138 together coordinate [4Fe-4S] cluster. S-adenosyl-L-methionine is bound by residues 186–187 (GE), serine 218, 240–242 (SLH), and asparagine 317. Cysteine 360 serves as the catalytic S-methylcysteine intermediate.

This sequence belongs to the radical SAM superfamily. RlmN family. It depends on [4Fe-4S] cluster as a cofactor.

The protein localises to the cytoplasm. It carries out the reaction adenosine(2503) in 23S rRNA + 2 reduced [2Fe-2S]-[ferredoxin] + 2 S-adenosyl-L-methionine = 2-methyladenosine(2503) in 23S rRNA + 5'-deoxyadenosine + L-methionine + 2 oxidized [2Fe-2S]-[ferredoxin] + S-adenosyl-L-homocysteine. It catalyses the reaction adenosine(37) in tRNA + 2 reduced [2Fe-2S]-[ferredoxin] + 2 S-adenosyl-L-methionine = 2-methyladenosine(37) in tRNA + 5'-deoxyadenosine + L-methionine + 2 oxidized [2Fe-2S]-[ferredoxin] + S-adenosyl-L-homocysteine. In terms of biological role, specifically methylates position 2 of adenine 2503 in 23S rRNA and position 2 of adenine 37 in tRNAs. m2A2503 modification seems to play a crucial role in the proofreading step occurring at the peptidyl transferase center and thus would serve to optimize ribosomal fidelity. The sequence is that of Dual-specificity RNA methyltransferase RlmN from Hyphomonas neptunium (strain ATCC 15444).